A 253-amino-acid polypeptide reads, in one-letter code: Sec-independent protein translocase protein TatC (253 aa).

The next 5 helical transmembrane spans lie at 19 to 39 (ILII…LATP), 70 to 90 (FAFT…LWAF), 109 to 129 (IAFF…FPFL), 154 to 174 (FLFQ…VVMF), and 194 to 214 (FFVL…SHLM).

Belongs to the TatC family. As to quaternary structure, forms a complex with TatA.

It localises to the cell membrane. Its function is as follows. Part of the twin-arginine translocation (Tat) system that transports large folded proteins containing a characteristic twin-arginine motif in their signal peptide across membranes. In Halalkalibacterium halodurans (strain ATCC BAA-125 / DSM 18197 / FERM 7344 / JCM 9153 / C-125) (Bacillus halodurans), this protein is Sec-independent protein translocase protein TatC.